The chain runs to 286 residues: uncharacterized protein (286 aa).

2 disordered regions span residues Pro59 to Lys89 and Arg225 to Arg286. A compositionally biased stretch (low complexity) spans Ala69–Ala85.

This is an uncharacterized protein from Mus musculus (Mouse).